A 115-amino-acid chain; its full sequence is MGVEISLDPPVCPIQANGGVSKHKMINHCDKILAFKVKSSNNSNYSVNLIYGILKVCDVKELVITRKPGKPQADKLIIQYCMVEDENADPKPLFANGVPPGELSGETVIKLSAAE.

Positions 1 to 115 constitute an MSP domain; that stretch reads MGVEISLDPP…ETVIKLSAAE (115 aa).

This is an uncharacterized protein from Caenorhabditis elegans.